The following is a 239-amino-acid chain: MTLALRYKRVLLKVSGEALMGEQSFGIDVSVADRIASDIAEVRKMGVEVAIVIGGGNIFRGVAVASHGGDRVTGDHMGMLATAINSLALRTSLTKLGVETVVLSAITMPQICESFSQRKAMSYMNQGKVVIFAGGTGNPFFTTDSAATLRAAEIGADVLLKGTQVDGIYSADPKINSTAKRFDQLTHVEILRLGLSIMDTTAVTLARENNIPIIVYSIHEKGGLTKVLNGTGRFTVVSE.

13-16 (KVSG) is an ATP binding site. G55 lines the UMP pocket. The ATP site is built by G56 and R60. UMP is bound by residues D75 and 136–143 (TGNPFFTT). ATP contacts are provided by T163, Q164, Y169, and D172.

This sequence belongs to the UMP kinase family. In terms of assembly, homohexamer.

It localises to the cytoplasm. The enzyme catalyses UMP + ATP = UDP + ADP. Its pathway is pyrimidine metabolism; CTP biosynthesis via de novo pathway; UDP from UMP (UMPK route): step 1/1. With respect to regulation, inhibited by UTP. Its function is as follows. Catalyzes the reversible phosphorylation of UMP to UDP. The polypeptide is Uridylate kinase (Bartonella bacilliformis (strain ATCC 35685 / KC583 / Herrer 020/F12,63)).